A 211-amino-acid polypeptide reads, in one-letter code: MSNPSSPNPLRVGIGGPVGSGKTALCEMLCKRMRDNYDMAVITNDIYTKEDMEILLRADALPAERLMGVETGGCPHTAIREDASINLEAIARMSADFPDLDLILVESGGDNLAATFSPELSDLTIYVIDVAGGEKIPRKGGPGITRSDLLIINKTDLAPYVGANLDIMAQDAKRMRGERPFVFTNLRSGDGVETVIEYIRKQGLLDEKRKN.

16–23 lines the GTP pocket; it reads GPVGSGKT.

It belongs to the SIMIBI class G3E GTPase family. UreG subfamily. In terms of assembly, homodimer. UreD, UreF and UreG form a complex that acts as a GTP-hydrolysis-dependent molecular chaperone, activating the urease apoprotein by helping to assemble the nickel containing metallocenter of UreC. The UreE protein probably delivers the nickel.

The protein localises to the cytoplasm. Its function is as follows. Facilitates the functional incorporation of the urease nickel metallocenter. This process requires GTP hydrolysis, probably effectuated by UreG. The polypeptide is Urease accessory protein UreG (Janthinobacterium sp. (strain Marseille) (Minibacterium massiliensis)).